A 2290-amino-acid polypeptide reads, in one-letter code: Protein Ycf2 (2290 aa).

1638–1645 (GSIGTGRS) lines the ATP pocket.

It belongs to the Ycf2 family.

The protein localises to the plastid. Its subcellular location is the chloroplast stroma. Probable ATPase of unknown function. Its presence in a non-photosynthetic plant (Epifagus virginiana) and experiments in tobacco indicate that it has an essential function which is probably not related to photosynthesis. The protein is Protein Ycf2 of Phalaenopsis aphrodite subsp. formosana (Moth orchid).